The following is a 102-amino-acid chain: NADH-quinone oxidoreductase subunit K (102 aa).

3 consecutive transmembrane segments (helical) span residues 5–25 (LGHF…GIFL), 31–51 (IVLL…FVAF), and 62–82 (IFVF…LALL).

This sequence belongs to the complex I subunit 4L family. In terms of assembly, NDH-1 is composed of 14 different subunits. Subunits NuoA, H, J, K, L, M, N constitute the membrane sector of the complex.

It is found in the cell inner membrane. It catalyses the reaction a quinone + NADH + 5 H(+)(in) = a quinol + NAD(+) + 4 H(+)(out). In terms of biological role, NDH-1 shuttles electrons from NADH, via FMN and iron-sulfur (Fe-S) centers, to quinones in the respiratory chain. The immediate electron acceptor for the enzyme in this species is believed to be ubiquinone. Couples the redox reaction to proton translocation (for every two electrons transferred, four hydrogen ions are translocated across the cytoplasmic membrane), and thus conserves the redox energy in a proton gradient. This Variovorax paradoxus (strain S110) protein is NADH-quinone oxidoreductase subunit K.